The primary structure comprises 672 residues: Nuclear RNA export factor 1 (672 aa).

2 disordered regions span residues 1–52 and 73–101; these read MPKR…SFKP and DEDD…IPRG. The span at 40–49 shows a compositional bias: basic residues; it reads RKDRNKRRVS. The RRM domain occupies 113–193; sequence WYQVTLQNAQ…PRVRSGIPLV (81 aa). LRR repeat units lie at residues 255–280, 281–304, 305–332, and 333–360; these read DLEA…KRLP, NLKI…LRNL, SILE…EVRR, and KFPK…GRLL. The region spanning 375–529 is the NTF2 domain; it reads VVRQFLDQYF…FCIRNETIFI (155 aa). Residues 541–564 form a disordered region; it reads KRSQHQPAPGAMPSTSSAVTSPQA. Residues 553-563 are compositionally biased toward polar residues; that stretch reads PSTSSAVTSPQ. The residue at position 561 (serine 561) is a Phosphoserine. Residues 618–672 enclose the TAP-C domain; it reads STKMQMIEAMSAQSQMNVIWSRKCLEETNWDFNHAAFVFEKLFKENKIPPEAFMK.

Belongs to the NXF family. Interacts with Nxt1. Interacts with ZC3H3. Forms a complex with Nup358/RanBP2, RanGAP and Nxt1. Interacts with Nup54 and Nup58. Interacts with Orc3 and Hpr1. In terms of tissue distribution, expressed ubiquitously.

Its subcellular location is the nucleus. It is found in the nucleoplasm. The protein resides in the cytoplasm. It localises to the nucleus envelope. Its function is as follows. Mediates the export of the majority of mRNAs from the nucleus to the cytoplasm. In ovarian follicle cells, plays a role in transposable element silencing regulation by enabling the nuclear export of flamenco (flam) transcripts and subsequent piRNA biogenesis. The protein is Nuclear RNA export factor 1 of Drosophila melanogaster (Fruit fly).